The primary structure comprises 606 residues: Kelch-like protein 41 (606 aa).

The residue at position 3 (Ser-3) is a Phosphoserine. A BTB domain is found at 33-100; it reads IDCTLKAGDK…LYSASIDLND (68 aa). The 103-residue stretch at 135-237 folds into the BACK domain; it reads CLAILRLGLL…AEKYFKDHVE (103 aa). 5 Kelch repeats span residues 346–398, 399–447, 448–495, 497–542, and 544–599; these read QVYV…EVDD, KIYV…SHNG, MIYC…IHKG, IVIA…SLAG, and LYAI…TRLN.

Interacts with NRAP. Part of a complex that contains CUL3, RBX1 and KLHL41. Interacts with LASP1. In terms of processing, ubiquitinated by E3 ubiquitin ligase complex formed by CUL3 and RBX1 and probably targeted for proteasome-independent degradation. Quinone-induced oxidative stress increases its ubiquitination. As to expression, skeletal muscle. Localized between laterally fusing myofibrils in skeletal muscle (at protein level). Expressed at a lower level in the heart compared to skeletal muscle.

Its subcellular location is the cytoplasm. The protein localises to the cytoskeleton. It is found in the cell projection. The protein resides in the pseudopodium. It localises to the ruffle. Its subcellular location is the myofibril. The protein localises to the sarcomere. It is found in the m line. The protein resides in the sarcoplasmic reticulum membrane. It localises to the endoplasmic reticulum membrane. Involved in skeletal muscle development and differentiation. Regulates proliferation and differentiation of myoblasts and plays a role in myofibril assembly by promoting lateral fusion of adjacent thin fibrils into mature, wide myofibrils. Required for pseudopod elongation in transformed cells. The sequence is that of Kelch-like protein 41 (Klhl41) from Mus musculus (Mouse).